A 391-amino-acid polypeptide reads, in one-letter code: GTPase Obg (391 aa).

The region spanning 1–159 is the Obg domain; it reads MKFVDEAVVK…REIRLELLLL (159 aa). Positions 160–333 constitute an OBG-type G domain; the sequence is ADVGMLGLPN…LCYKLADFME (174 aa). Residues 166–173, 191–195, 213–216, 283–286, and 314–316 each bind GTP; these read GLPNAGKS, FTTLI, DIPG, NKTD, and SAI. Residues serine 173 and threonine 193 each contribute to the Mg(2+) site. Residues 367–383 are compositionally biased toward acidic residues; that stretch reads TEEDDDDWDDCDDEDDD. Positions 367 to 391 are disordered; sequence TEEDDDDWDDCDDEDDDGHVVYVRD.

The protein belongs to the TRAFAC class OBG-HflX-like GTPase superfamily. OBG GTPase family. As to quaternary structure, monomer. Requires Mg(2+) as cofactor.

The protein localises to the cytoplasm. In terms of biological role, an essential GTPase which binds GTP, GDP and possibly (p)ppGpp with moderate affinity, with high nucleotide exchange rates and a fairly low GTP hydrolysis rate. Plays a role in control of the cell cycle, stress response, ribosome biogenesis and in those bacteria that undergo differentiation, in morphogenesis control. In Vibrio campbellii (strain ATCC BAA-1116), this protein is GTPase Obg.